The chain runs to 50 residues: Large ribosomal subunit protein bL33 (50 aa).

Belongs to the bacterial ribosomal protein bL33 family.

This is Large ribosomal subunit protein bL33 from Hydrogenovibrio crunogenus (strain DSM 25203 / XCL-2) (Thiomicrospira crunogena).